The chain runs to 390 residues: Endoglucanase gh5-1 (390 aa).

Positions 1–16 (MKATILASTFAAGALA) are cleaved as a signal peptide. The region spanning 17 to 52 (QSGAWGQCGGNGWSGATSCISGYACNYVNDWYSQCQ) is the CBM1 domain. Asn-157 and Asn-261 each carry an N-linked (GlcNAc...) asparagine glycan.

Belongs to the glycosyl hydrolase 5 (cellulase A) family. N-glycosylated.

It is found in the secreted. The enzyme catalyses Endohydrolysis of (1-&gt;4)-beta-D-glucosidic linkages in cellulose, lichenin and cereal beta-D-glucans.. Endoglucanase that plays an important role in biomass degradation. Binds onto plant cell walls to participate in the hydrolysis of cellulose. The protein is Endoglucanase gh5-1 of Neurospora crassa (strain ATCC 24698 / 74-OR23-1A / CBS 708.71 / DSM 1257 / FGSC 987).